A 113-amino-acid chain; its full sequence is Beta-microseminoprotein A1 (113 aa).

A signal peptide spans 1-20; it reads MNVLLGGLVIFATFVTLCNG. Cystine bridges form between cysteine 22-cysteine 70, cysteine 38-cysteine 62, cysteine 57-cysteine 93, cysteine 60-cysteine 69, and cysteine 84-cysteine 107.

This sequence belongs to the beta-microseminoprotein family.

The protein resides in the secreted. This Saguinus oedipus (Cotton-top tamarin) protein is Beta-microseminoprotein A1 (MSPA).